Reading from the N-terminus, the 129-residue chain is Protein HMF1 (129 aa).

Residue lysine 52 forms a Glycyl lysine isopeptide (Lys-Gly) (interchain with G-Cter in ubiquitin) linkage.

This sequence belongs to the RutC family.

It is found in the cytoplasm. The protein resides in the nucleus. Its subcellular location is the mitochondrion intermembrane space. This Saccharomyces cerevisiae (strain ATCC 204508 / S288c) (Baker's yeast) protein is Protein HMF1 (HMF1).